The primary structure comprises 210 residues: Protein-methionine-sulfoxide reductase heme-binding subunit MsrQ (210 aa).

A run of 6 helical transmembrane segments spans residues 8 to 28 (LAVF…AWIF), 37 to 57 (VLVE…LAMT), 75 to 95 (LGLW…LFIL), 110 to 130 (PYII…VTSN), 147 to 167 (LVYV…RADL), and 169 to 189 (EWAL…PMIA).

This sequence belongs to the MsrQ family. Heterodimer of a catalytic subunit (MsrP) and a heme-binding subunit (MsrQ). FMN is required as a cofactor. The cofactor is heme b.

Its subcellular location is the cell inner membrane. Functionally, part of the MsrPQ system that repairs oxidized periplasmic proteins containing methionine sulfoxide residues (Met-O), using respiratory chain electrons. Thus protects these proteins from oxidative-stress damage caused by reactive species of oxygen and chlorine generated by the host defense mechanisms. MsrPQ is essential for the maintenance of envelope integrity under bleach stress, rescuing a wide series of structurally unrelated periplasmic proteins from methionine oxidation. MsrQ provides electrons for reduction to the reductase catalytic subunit MsrP, using the quinone pool of the respiratory chain. The chain is Protein-methionine-sulfoxide reductase heme-binding subunit MsrQ from Pseudomonas syringae pv. tomato (strain ATCC BAA-871 / DC3000).